The chain runs to 640 residues: Guanylate-binding protein 4 (640 aa).

The tract at residues 1–325 (MGERTLHAAV…DAINSGAVPC (325 aa)) is GTPase domain (Globular). The 243-residue stretch at 50 to 292 (SQPVVVVAIV…FCSYIFTHAK (243 aa)) folds into the GB1/RHD3-type G domain. GTP-binding positions include 60-67 (GLYRTGKS), 82-84 (LGS), and 112-116 (DTEGL). A coiled-coil region spans residues 499–612 (GEKAIAAERA…EQLRLLKILD (114 aa)).

The protein belongs to the TRAFAC class dynamin-like GTPase superfamily. GB1/RHD3 GTPase family. GB1 subfamily. As to quaternary structure, heterodimer with other family members, including GBP1, GBP2 and GBP5. Dimerization regulates subcellular location. Interacts with IRF7; preventing interaction between TRAF6 and IRF7, resulting in impaired TRAF6-mediated IRF7 ubiquitination. (Microbial infection) Ubiquitinated by S.flexneri IpaH9.8, leading to its degradation by the proteasome, thereby preventing its ability to promote host defense against bacterial infection.

It localises to the golgi apparatus membrane. The protein localises to the cytoplasm. Its subcellular location is the nucleus. The protein resides in the perinuclear region. It catalyses the reaction GTP + H2O = GDP + phosphate + H(+). Its function is as follows. Interferon (IFN)-inducible GTPase that plays important roles in innate immunity against a diverse range of bacterial, viral and protozoan pathogens. Negatively regulates the antiviral response by inhibiting activation of IRF7 transcription factor. The chain is Guanylate-binding protein 4 from Homo sapiens (Human).